Here is a 246-residue protein sequence, read N- to C-terminus: DNA repair protein RecO (246 aa).

It belongs to the RecO family.

Functionally, involved in DNA repair and RecF pathway recombination. In Marinobacter nauticus (strain ATCC 700491 / DSM 11845 / VT8) (Marinobacter aquaeolei), this protein is DNA repair protein RecO.